The following is a 298-amino-acid chain: uncharacterized protein (298 aa).

The HTH araC/xylS-type domain occupies 194–295; that stretch reads KRLNTALIAI…QLSPSQYRKS (102 aa). 2 consecutive DNA-binding regions (H-T-H motif) follow at residues 214-235 and 262-285; these read EQLAELATMSRANFIRIFQQHI and VLAIALEVGYQSEAHFCKVFKNYY.

This is an uncharacterized protein from Haemophilus influenzae (strain ATCC 51907 / DSM 11121 / KW20 / Rd).